Reading from the N-terminus, the 191-residue chain is Peptidyl-tRNA hydrolase (191 aa).

TRNA is bound at residue Y17. Catalysis depends on H22, which acts as the Proton acceptor. Residues Y68, N70, and N116 each coordinate tRNA.

Belongs to the PTH family. As to quaternary structure, monomer.

The protein localises to the cytoplasm. The catalysed reaction is an N-acyl-L-alpha-aminoacyl-tRNA + H2O = an N-acyl-L-amino acid + a tRNA + H(+). Hydrolyzes ribosome-free peptidyl-tRNAs (with 1 or more amino acids incorporated), which drop off the ribosome during protein synthesis, or as a result of ribosome stalling. In terms of biological role, catalyzes the release of premature peptidyl moieties from peptidyl-tRNA molecules trapped in stalled 50S ribosomal subunits, and thus maintains levels of free tRNAs and 50S ribosomes. This is Peptidyl-tRNA hydrolase from Mycobacterium avium (strain 104).